A 508-amino-acid chain; its full sequence is Lysine--tRNA ligase (508 aa).

Mg(2+) contacts are provided by E418 and E425.

Belongs to the class-II aminoacyl-tRNA synthetase family. As to quaternary structure, homodimer. It depends on Mg(2+) as a cofactor.

Its subcellular location is the cytoplasm. The enzyme catalyses tRNA(Lys) + L-lysine + ATP = L-lysyl-tRNA(Lys) + AMP + diphosphate. The sequence is that of Lysine--tRNA ligase from Burkholderia pseudomallei (strain 668).